The following is a 195-amino-acid chain: Ureidoglycolate lyase (195 aa).

It belongs to the ureidoglycolate lyase family. In terms of assembly, homodimer.

It catalyses the reaction (S)-ureidoglycolate = urea + glyoxylate. Its pathway is nitrogen metabolism; (S)-allantoin degradation. Functionally, catalyzes the catabolism of the allantoin degradation intermediate (S)-ureidoglycolate, generating urea and glyoxylate. Involved in the utilization of allantoin as secondary nitrogen source when primary sources are limiting. This Saccharomyces cerevisiae (strain ATCC 204508 / S288c) (Baker's yeast) protein is Ureidoglycolate lyase (DAL3).